The following is a 194-amino-acid chain: Leucyl/phenylalanyl-tRNA--protein transferase (194 aa).

This sequence belongs to the L/F-transferase family.

It is found in the cytoplasm. It carries out the reaction N-terminal L-lysyl-[protein] + L-leucyl-tRNA(Leu) = N-terminal L-leucyl-L-lysyl-[protein] + tRNA(Leu) + H(+). The enzyme catalyses N-terminal L-arginyl-[protein] + L-leucyl-tRNA(Leu) = N-terminal L-leucyl-L-arginyl-[protein] + tRNA(Leu) + H(+). It catalyses the reaction L-phenylalanyl-tRNA(Phe) + an N-terminal L-alpha-aminoacyl-[protein] = an N-terminal L-phenylalanyl-L-alpha-aminoacyl-[protein] + tRNA(Phe). Functionally, functions in the N-end rule pathway of protein degradation where it conjugates Leu, Phe and, less efficiently, Met from aminoacyl-tRNAs to the N-termini of proteins containing an N-terminal arginine or lysine. The sequence is that of Leucyl/phenylalanyl-tRNA--protein transferase from Chlorobium phaeobacteroides (strain DSM 266 / SMG 266 / 2430).